A 393-amino-acid chain; its full sequence is NAD(P)H-quinone oxidoreductase subunit H, chloroplastic (393 aa).

It belongs to the complex I 49 kDa subunit family. In terms of assembly, NDH is composed of at least 16 different subunits, 5 of which are encoded in the nucleus.

It is found in the plastid. It localises to the chloroplast thylakoid membrane. It carries out the reaction a plastoquinone + NADH + (n+1) H(+)(in) = a plastoquinol + NAD(+) + n H(+)(out). The enzyme catalyses a plastoquinone + NADPH + (n+1) H(+)(in) = a plastoquinol + NADP(+) + n H(+)(out). Functionally, NDH shuttles electrons from NAD(P)H:plastoquinone, via FMN and iron-sulfur (Fe-S) centers, to quinones in the photosynthetic chain and possibly in a chloroplast respiratory chain. The immediate electron acceptor for the enzyme in this species is believed to be plastoquinone. Couples the redox reaction to proton translocation, and thus conserves the redox energy in a proton gradient. This chain is NAD(P)H-quinone oxidoreductase subunit H, chloroplastic, found in Anthoceros angustus (Hornwort).